The chain runs to 293 residues: Aspartate carbamoyltransferase catalytic subunit (293 aa).

2 residues coordinate carbamoyl phosphate: R50 and T51. K78 serves as a coordination point for L-aspartate. Carbamoyl phosphate is bound by residues R100, H127, and Q130. Positions 160 and 210 each coordinate L-aspartate. The carbamoyl phosphate site is built by A253 and P254.

It belongs to the aspartate/ornithine carbamoyltransferase superfamily. ATCase family. As to quaternary structure, heterododecamer (2C3:3R2) of six catalytic PyrB chains organized as two trimers (C3), and six regulatory PyrI chains organized as three dimers (R2).

The catalysed reaction is carbamoyl phosphate + L-aspartate = N-carbamoyl-L-aspartate + phosphate + H(+). Its pathway is pyrimidine metabolism; UMP biosynthesis via de novo pathway; (S)-dihydroorotate from bicarbonate: step 2/3. Functionally, catalyzes the condensation of carbamoyl phosphate and aspartate to form carbamoyl aspartate and inorganic phosphate, the committed step in the de novo pyrimidine nucleotide biosynthesis pathway. This Staphylococcus aureus (strain USA300) protein is Aspartate carbamoyltransferase catalytic subunit.